We begin with the raw amino-acid sequence, 194 residues long: Naphthalene 1,2-dioxygenase system, small oxygenase component (194 aa).

It belongs to the bacterial ring-hydroxylating dioxygenase beta subunit family. As to quaternary structure, the naphthalene dioxygenase (NDO) multicomponent enzyme system is composed of an electron transfer component and a dioxygenase component (iron sulfur protein (ISP)). The electron transfer component is composed of a ferredoxin reductase (NdoR) and a ferredoxin (NdoA), and the dioxygenase component is formed of a heterohexamer (trimer of heterodimers) of three large alpha subunits (NdoB) and three small beta subunits (NdoC).

It participates in aromatic compound metabolism; naphthalene degradation. In terms of biological role, component of the naphthalene dioxygenase (NDO) multicomponent enzyme system which catalyzes the incorporation of both atoms of molecular oxygen into naphthalene to form cis-(1R,2S)-dihydroxy-1,2-dihydronaphthalene. The beta subunit seems to have a structural role in the holoenzyme. Also able to catalyze the cis-dihydroxylation of biphenyl and phenanthrene. This Pseudomonas putida (Arthrobacter siderocapsulatus) protein is Naphthalene 1,2-dioxygenase system, small oxygenase component.